The following is a 459-amino-acid chain: Cysteine--tRNA ligase (459 aa).

Residue cysteine 28 participates in Zn(2+) binding. The 'HIGH' region signature appears at 30-40; that stretch reads VTIYDLCHIGH. Zn(2+) is bound by residues cysteine 209, histidine 234, and glutamate 238. The short motif at 266–270 is the 'KMSKS' region element; the sequence is KMSKS. An ATP-binding site is contributed by lysine 269.

The protein belongs to the class-I aminoacyl-tRNA synthetase family. As to quaternary structure, monomer. Zn(2+) serves as cofactor.

It localises to the cytoplasm. The catalysed reaction is tRNA(Cys) + L-cysteine + ATP = L-cysteinyl-tRNA(Cys) + AMP + diphosphate. This chain is Cysteine--tRNA ligase, found in Shewanella baltica (strain OS155 / ATCC BAA-1091).